Here is a 762-residue protein sequence, read N- to C-terminus: cGMP-dependent protein kinase 2 (762 aa).

The interval 1-25 (MGNGSVKPKHSKHPDGHSGNLTTDA) is disordered. A lipid anchor (N-myristoyl glycine) is attached at glycine 2. A coiled-coil region spans residues 23-85 (TDALRNKVTE…CIQLNKLQDV (63 aa)). Residues serine 110 and serine 117 each carry the phosphoserine modification. The interval 117 to 138 (SRRGAKAGVSAEPTTRTYDLNK) is disordered. The interval 168-283 (FLKRLDPQQI…DEQYRNFLRS (116 aa)) is cGMP-binding, high affinity; cAMP-binding, moderate affinity. 3',5'-cyclic AMP-binding positions include 232–235 (GELA) and 242–243 (RT). 3',5'-cyclic GMP is bound by residues 232–235 (GELA), 242–243 (RT), lysine 347, 356–359 (GEKA), 366–367 (RS), aspartate 412, and arginine 415. Positions 286-416 (LLKNLPEDKL…NLNRDDEKRH (131 aa)) are cGMP-binding, high affinity; cAMP-binding, low affinity. A Phosphoserine modification is found at serine 431. The 259-residue stretch at 453–711 (LEIIATLGVG…INDIKKHRWL (259 aa)) folds into the Protein kinase domain. ATP is bound by residues 459-467 (LGVGGFGRV) and lysine 482. Aspartate 576 serves as the catalytic Proton acceptor. The residue at position 609 (threonine 609) is a Phosphothreonine. Positions 712–762 (NGFNWEGLKARSLPSPLQRELKGPIDHSYFDKYPPEKGMPPDELSGWDKDF) constitute an AGC-kinase C-terminal domain. The disordered stretch occupies residues 740–762 (YFDKYPPEKGMPPDELSGWDKDF).

Belongs to the protein kinase superfamily. AGC Ser/Thr protein kinase family. cGMP subfamily. Interacts with GRIA1/GLUR1. Post-translationally, myristoylation mediates membrane localization. As to expression, highly concentrated in brain, lung and intestinal mucosa.

Its subcellular location is the apical cell membrane. The enzyme catalyses L-seryl-[protein] + ATP = O-phospho-L-seryl-[protein] + ADP + H(+). The catalysed reaction is L-threonyl-[protein] + ATP = O-phospho-L-threonyl-[protein] + ADP + H(+). With respect to regulation, binding of cGMP results in enzyme activation. In terms of biological role, crucial regulator of intestinal secretion and bone growth. Phosphorylates and activates CFTR on the plasma membrane. Plays a key role in intestinal secretion by regulating cGMP-dependent translocation of CFTR in jejunum. Acts downstream of NMDAR to activate the plasma membrane accumulation of GRIA1/GLUR1 in synapse and increase synaptic plasticity. Phosphorylates GRIA1/GLUR1 at Ser-863. Acts as a regulator of gene expression and activator of the extracellular signal-regulated kinases MAPK3/ERK1 and MAPK1/ERK2 in mechanically stimulated osteoblasts. Under fluid shear stress, mediates ERK activation and subsequent induction of FOS, FOSL1/FRA1, FOSL2/FRA2 and FOSB that play a key role in the osteoblast anabolic response to mechanical stimulation. This is cGMP-dependent protein kinase 2 (PRKG2) from Homo sapiens (Human).